We begin with the raw amino-acid sequence, 376 residues long: Ribonucleoside-diphosphate reductase 1 subunit beta (376 aa).

Fe cation is bound by residues aspartate 85, glutamate 116, and histidine 119. Tyrosine 123 is a catalytic residue. Fe cation-binding residues include glutamate 205, glutamate 239, and histidine 242.

It belongs to the ribonucleoside diphosphate reductase small chain family. In terms of assembly, tetramer of two alpha (R1) and two beta (R2) subunits. The B1 protein is a dimer of alpha subunits. A radical transfer pathway occurs between Tyr-123 of R2 and R1. Fe cation is required as a cofactor.

The catalysed reaction is a 2'-deoxyribonucleoside 5'-diphosphate + [thioredoxin]-disulfide + H2O = a ribonucleoside 5'-diphosphate + [thioredoxin]-dithiol. Provides the precursors necessary for DNA synthesis. Catalyzes the biosynthesis of deoxyribonucleotides from the corresponding ribonucleotides. R2 contains the tyrosyl radical required for catalysis. This chain is Ribonucleoside-diphosphate reductase 1 subunit beta (nrdB), found in Escherichia coli O157:H7.